The chain runs to 481 residues: Proline--tRNA ligase (481 aa).

It belongs to the class-II aminoacyl-tRNA synthetase family. ProS type 3 subfamily. Homodimer.

Its subcellular location is the cytoplasm. The enzyme catalyses tRNA(Pro) + L-proline + ATP = L-prolyl-tRNA(Pro) + AMP + diphosphate. Functionally, catalyzes the attachment of proline to tRNA(Pro) in a two-step reaction: proline is first activated by ATP to form Pro-AMP and then transferred to the acceptor end of tRNA(Pro). The polypeptide is Proline--tRNA ligase (Saccharolobus islandicus (strain Y.N.15.51 / Yellowstone #2) (Sulfolobus islandicus)).